The following is a 477-amino-acid chain: MKILFASSESYPFIKTGGLGDVSYALPKALRKIGIDARVIIPKYSDIPEYFRYNTHHIASFGVPVGWRSQYGGLEYYEYDGVPFYFIDNDYYFKRSGLYGYYDDGERFAYFSRGVLQAITYMQDFNPDIIQCNDWQTAIIPVLLKDHYRNYRNYNHIKTIFTIHNLKYQGVFGKSVLGELLCLNEGYYNENALKFYDGISFMKGGILFSDKLSTVSRTYAEEIKDPYYGEHLDGLLRSRSYDLWGIVNGIDYDILNPETDKDLFFNFDSSTLYNKTKNKIELQKMLNLPVSENIPMIGIVSRLVSQKGLDLISCVLEDLLQDGIQLVVLGTGDAKYENMFKYFAWKYPNKLSANIQFNNSLAQKIYGASDMFLMPSKFEPCGIGQLIALRYGSLPIVRETGGLKDTVRPFNPITGEGNGFSFTNYNAHDMLHVIRNAEYFYYNEKYNWNKLVQTAMNDDNSWSKSAEIYRNLYMSVL.

ADP-alpha-D-glucose is bound at residue lysine 15.

Belongs to the glycosyltransferase 1 family. Bacterial/plant glycogen synthase subfamily.

It carries out the reaction [(1-&gt;4)-alpha-D-glucosyl](n) + ADP-alpha-D-glucose = [(1-&gt;4)-alpha-D-glucosyl](n+1) + ADP + H(+). Its pathway is glycan biosynthesis; glycogen biosynthesis. Its function is as follows. Synthesizes alpha-1,4-glucan chains using ADP-glucose. The sequence is that of Glycogen synthase from Clostridium acetobutylicum (strain ATCC 824 / DSM 792 / JCM 1419 / IAM 19013 / LMG 5710 / NBRC 13948 / NRRL B-527 / VKM B-1787 / 2291 / W).